The following is a 28-amino-acid chain: Mu-theraphotoxin-Hsp1a (28 aa).

Cystine bridges form between Cys2–Cys16, Cys9–Cys21, and Cys15–Cys25. Position 28 is an asparagine amide (Asn28).

The protein belongs to the neurotoxin 30 (phrixotoxin) family. In terms of tissue distribution, expressed by the venom gland.

It localises to the secreted. Potent and selective inhibitor of Nav1.7/SCN9A sodium channels. Inhibits Nav1.7/SCN9A peak current (IC(50)=13 nM). In vivo, does not induce visible signs of toxicity when intravenously injected into mice. This Homoeomma sp. (Peruvian tarantula) protein is Mu-theraphotoxin-Hsp1a.